Reading from the N-terminus, the 314-residue chain is Malate dehydrogenase (314 aa).

Residues glycine 11 to glycine 16 and aspartate 35 each bind NAD(+). 2 residues coordinate substrate: arginine 84 and arginine 90. Residues asparagine 97 and isoleucine 120–asparagine 122 contribute to the NAD(+) site. Residues asparagine 122 and arginine 153 each coordinate substrate. Histidine 177 serves as the catalytic Proton acceptor.

It belongs to the LDH/MDH superfamily. MDH type 3 family.

It carries out the reaction (S)-malate + NAD(+) = oxaloacetate + NADH + H(+). Catalyzes the reversible oxidation of malate to oxaloacetate. In Rickettsia canadensis (strain McKiel), this protein is Malate dehydrogenase.